A 530-amino-acid polypeptide reads, in one-letter code: Autoinducer-2 kinase (530 aa).

It belongs to the FGGY kinase family.

It is found in the cytoplasm. It carries out the reaction (S)-4,5-dihydroxypentane-2,3-dione + ATP = (2S)-2-hydroxy-3,4-dioxopentyl phosphate + ADP + H(+). Catalyzes the phosphorylation of autoinducer-2 (AI-2) to phospho-AI-2, which subsequently inactivates the transcriptional regulator LsrR and leads to the transcription of the lsr operon. Phosphorylates the ring-open form of (S)-4,5-dihydroxypentane-2,3-dione (DPD), which is the precursor to all AI-2 signaling molecules, at the C5 position. This is Autoinducer-2 kinase from Yersinia pestis bv. Antiqua (strain Angola).